The primary structure comprises 284 residues: GPN-loop GTPase 3 (284 aa).

13-18 (GSGKST) serves as a coordination point for GTP. Residues 72–74 (GPN) carry the Gly-Pro-Asn (GPN)-loop; involved in dimer interface motif. GTP is bound at residue 174–177 (TKMD). The segment at 262–284 (EPREHEEESSSMFDEYFQERQNE) is disordered.

The protein belongs to the GPN-loop GTPase family. In terms of assembly, heterodimer with GPN1. Binds to RNA polymerase II (RNAPII). Interacts directly with subunits RPB4 and RPB7 and the CTD of RPB1.

Its function is as follows. Small GTPase required for proper localization of RNA polymerase II (RNAPII). May act at an RNAP assembly step prior to nuclear import. This chain is GPN-loop GTPase 3, found in Mus musculus (Mouse).